We begin with the raw amino-acid sequence, 558 residues long: Nucleoprotein (558 aa).

The binding site for the cap structure m7GTP stretch occupies residues 54–237 (MRKEKRDDKD…ITEQQSSINI (184 aa)). Mg(2+) contacts are provided by Asp-382 and Glu-384. Mn(2+) is bound by residues Asp-382 and Glu-384. Zn(2+) is bound by residues Glu-392, Cys-499, His-502, and Cys-518. Asp-522 lines the Mg(2+) pocket. Asp-522 contacts Mn(2+).

It belongs to the arenaviridae nucleocapsid protein family. Homomultimerizes to form the nucleocapsid. Binds to viral genomic RNA. Interacts with glycoprotein G2. Interacts with protein Z; this interaction probably directs the encapsidated genome to budding sites. Interacts with protein L; this interaction does not interfere with Z-L interaction. Interacts with host IKBKE (via Protein kinase domain); the interaction inhibits IKBKE kinase activity.

It localises to the virion. The protein localises to the host cytoplasm. Its function is as follows. Encapsidates the genome, protecting it from nucleases. The encapsidated genomic RNA is termed the nucleocapsid (NC). Serves as template for viral transcription and replication. The increased presence of protein N in host cell does not seem to trigger the switch from transcription to replication as observed in other negative strain RNA viruses. Through the interaction with host IKBKE, strongly inhibits the phosphorylation and nuclear translocation of host IRF3, a protein involved in interferon activation pathway, leading to the inhibition of interferon-beta and IRF3-dependent promoters activation. Also encodes a functional 3'-5' exoribonuclease that degrades preferentially dsRNA substrates and thereby participates in the suppression of interferon induction. This is Nucleoprotein from Lymphocytic choriomeningitis virus (strain Armstrong) (LCMV).